The sequence spans 350 residues: Probable arabinogalactan endo-beta-1,4-galactanase A (350 aa).

An N-terminal signal peptide occupies residues 1–16 (MIYSLLLSALPLLSSA). N128 is a glycosylation site (N-linked (GlcNAc...) asparagine). E152 serves as the catalytic Proton donor. The Nucleophile role is filled by E262.

It belongs to the glycosyl hydrolase 53 family.

Its subcellular location is the secreted. It carries out the reaction The enzyme specifically hydrolyzes (1-&gt;4)-beta-D-galactosidic linkages in type I arabinogalactans.. Its function is as follows. Endogalactanase involved in the degradation of plant cell wall polysaccharides, and more particularly of hairy regions of pectin. The chain is Probable arabinogalactan endo-beta-1,4-galactanase A (galA) from Aspergillus niger (strain ATCC MYA-4892 / CBS 513.88 / FGSC A1513).